We begin with the raw amino-acid sequence, 302 residues long: tRNA dimethylallyltransferase (302 aa).

An ATP-binding site is contributed by 9-16 (GPTGTGKS). Residue 11 to 16 (TGTGKS) coordinates substrate.

It belongs to the IPP transferase family. Monomer. Requires Mg(2+) as cofactor.

The enzyme catalyses adenosine(37) in tRNA + dimethylallyl diphosphate = N(6)-dimethylallyladenosine(37) in tRNA + diphosphate. In terms of biological role, catalyzes the transfer of a dimethylallyl group onto the adenine at position 37 in tRNAs that read codons beginning with uridine, leading to the formation of N6-(dimethylallyl)adenosine (i(6)A). This chain is tRNA dimethylallyltransferase, found in Mycolicibacterium smegmatis (strain ATCC 700084 / mc(2)155) (Mycobacterium smegmatis).